Reading from the N-terminus, the 365-residue chain is Putative carbonic anhydrase-like protein 1 (365 aa).

An N-terminal signal peptide occupies residues 1–25 (MRFECSHFPLFLIILTCHISPLKSS). The Alpha-carbonic anhydrase domain occupies 28 to 356 (YQWSYDSDVF…TNNRLVRTNI (329 aa)). Residue Tyr223 is part of the active site. Residues Thr295 and 295 to 296 (TS) each bind substrate.

This sequence belongs to the alpha-carbonic anhydrase family.

It is found in the secreted. The sequence is that of Putative carbonic anhydrase-like protein 1 (cah-1) from Caenorhabditis elegans.